Here is a 67-residue protein sequence, read N- to C-terminus: DNA-directed RNA polymerase subunit omega (67 aa).

Belongs to the RNA polymerase subunit omega family. As to quaternary structure, the RNAP catalytic core consists of 2 alpha, 1 beta, 1 beta' and 1 omega subunit. When a sigma factor is associated with the core the holoenzyme is formed, which can initiate transcription.

The enzyme catalyses RNA(n) + a ribonucleoside 5'-triphosphate = RNA(n+1) + diphosphate. Promotes RNA polymerase assembly. Latches the N- and C-terminal regions of the beta' subunit thereby facilitating its interaction with the beta and alpha subunits. This chain is DNA-directed RNA polymerase subunit omega (rpoZ), found in Treponema pallidum (strain Nichols).